We begin with the raw amino-acid sequence, 329 residues long: GTPase Obg (329 aa).

Positions 1 to 159 (MQFIDQARIS…WPLQLELKLL (159 aa)) constitute an Obg domain. The OBG-type G domain occupies 160–328 (AEVGIIGLPN…MLDRVWSELG (169 aa)). Residues 166–173 (GLPNAGKS), 191–195 (FTTLI), 213–216 (DIPG), 280–283 (NKQE), and 309–311 (SAA) contribute to the ATP site. The Mg(2+) site is built by Ser173 and Thr193.

It belongs to the TRAFAC class OBG-HflX-like GTPase superfamily. OBG GTPase family. Monomer. The cofactor is Mg(2+).

The protein localises to the cytoplasm. In terms of biological role, an essential GTPase which binds GTP, GDP and possibly (p)ppGpp with moderate affinity, with high nucleotide exchange rates and a fairly low GTP hydrolysis rate. Plays a role in control of the cell cycle, stress response, ribosome biogenesis and in those bacteria that undergo differentiation, in morphogenesis control. In Synechococcus sp. (strain CC9311), this protein is GTPase Obg.